The following is a 175-amino-acid chain: tRNA (cytidine(56)-2'-O)-methyltransferase (175 aa).

L83 contacts S-adenosyl-L-methionine.

This sequence belongs to the aTrm56 family. As to quaternary structure, homodimer.

The protein localises to the cytoplasm. The catalysed reaction is cytidine(56) in tRNA + S-adenosyl-L-methionine = 2'-O-methylcytidine(56) in tRNA + S-adenosyl-L-homocysteine + H(+). Functionally, specifically catalyzes the AdoMet-dependent 2'-O-ribose methylation of cytidine at position 56 in tRNAs. This chain is tRNA (cytidine(56)-2'-O)-methyltransferase, found in Methanosphaera stadtmanae (strain ATCC 43021 / DSM 3091 / JCM 11832 / MCB-3).